We begin with the raw amino-acid sequence, 121 residues long: T cell receptor alpha variable 23/delta variable 6 (121 aa).

The first 21 residues, 1 to 21 (MDKILGASFLVLWLQLCWVSG), serve as a signal peptide directing secretion. The region spanning 30 to 121 (QQVKQSPQSL…DSATYFCAAS (92 aa)) is the Ig-like domain. Cysteines 51 and 118 form a disulfide. A glycan (N-linked (GlcNAc...) asparagine) is linked at Asn95.

As to quaternary structure, alpha-beta TR is a heterodimer composed of an alpha and beta chain; disulfide-linked. The alpha-beta TR is associated with the transmembrane signaling CD3 coreceptor proteins to form the TR-CD3 (TcR or TCR). The assembly of alpha-beta TR heterodimers with CD3 occurs in the endoplasmic reticulum where a single alpha-beta TR heterodimer associates with one CD3D-CD3E heterodimer, one CD3G-CD3E heterodimer and one CD247 homodimer forming a stable octameric structure. CD3D-CD3E and CD3G-CD3E heterodimers preferentially associate with TR alpha and TR beta chains, respectively. The association of the CD247 homodimer is the last step of TcR assembly in the endoplasmic reticulum and is required for transport to the cell surface.

It localises to the cell membrane. Functionally, v region of the variable domain of T cell receptor (TR) alpha chain that participates in the antigen recognition. Alpha-beta T cell receptors are antigen specific receptors which are essential to the immune response and are present on the cell surface of T lymphocytes. Recognize peptide-major histocompatibility (MH) (pMH) complexes that are displayed by antigen presenting cells (APC), a prerequisite for efficient T cell adaptive immunity against pathogens. Binding of alpha-beta TR to pMH complex initiates TR-CD3 clustering on the cell surface and intracellular activation of LCK that phosphorylates the ITAM motifs of CD3G, CD3D, CD3E and CD247 enabling the recruitment of ZAP70. In turn ZAP70 phosphorylates LAT, which recruits numerous signaling molecules to form the LAT signalosome. The LAT signalosome propagates signal branching to three major signaling pathways, the calcium, the mitogen-activated protein kinase (MAPK) kinase and the nuclear factor NF-kappa-B (NF-kB) pathways, leading to the mobilization of transcription factors that are critical for gene expression and essential for T cell growth and differentiation. The T cell repertoire is generated in the thymus, by V-(D)-J rearrangement. This repertoire is then shaped by intrathymic selection events to generate a peripheral T cell pool of self-MH restricted, non-autoaggressive T cells. Post-thymic interaction of alpha-beta TR with the pMH complexes shapes TR structural and functional avidity. This chain is T cell receptor alpha variable 23/delta variable 6, found in Homo sapiens (Human).